The following is a 545-amino-acid chain: Glucose-6-phosphate isomerase (545 aa).

Glutamate 343 acts as the Proton donor in catalysis. Residues histidine 374 and lysine 513 contribute to the active site.

This sequence belongs to the GPI family.

The protein resides in the cytoplasm. The catalysed reaction is alpha-D-glucose 6-phosphate = beta-D-fructose 6-phosphate. It functions in the pathway carbohydrate biosynthesis; gluconeogenesis. The protein operates within carbohydrate degradation; glycolysis; D-glyceraldehyde 3-phosphate and glycerone phosphate from D-glucose: step 2/4. In terms of biological role, catalyzes the reversible isomerization of glucose-6-phosphate to fructose-6-phosphate. The chain is Glucose-6-phosphate isomerase from Methylibium petroleiphilum (strain ATCC BAA-1232 / LMG 22953 / PM1).